Reading from the N-terminus, the 448-residue chain is Beta-glucosidase B (448 aa).

Glu-167 (proton donor) is an active-site residue. The active-site Nucleophile is Glu-356.

It belongs to the glycosyl hydrolase 1 family.

It catalyses the reaction Hydrolysis of terminal, non-reducing beta-D-glucosyl residues with release of beta-D-glucose.. This Paenibacillus polymyxa (Bacillus polymyxa) protein is Beta-glucosidase B (bglB).